The sequence spans 396 residues: Elongation factor Tu (396 aa).

Positions 10–206 (KPHVNVGTIG…AMDEYIPTPE (197 aa)) constitute a tr-type G domain. Positions 19-26 (GHVDHGKT) are G1. Residue 19–26 (GHVDHGKT) participates in GTP binding. Thr-26 contacts Mg(2+). Positions 60–64 (GITIA) are G2. A G3 region spans residues 81-84 (DCPG). Residues 81 to 85 (DCPGH) and 136 to 139 (NKAD) each bind GTP. The G4 stretch occupies residues 136–139 (NKAD). Positions 174–176 (SAL) are G5.

This sequence belongs to the TRAFAC class translation factor GTPase superfamily. Classic translation factor GTPase family. EF-Tu/EF-1A subfamily. In terms of assembly, monomer.

Its subcellular location is the cytoplasm. It catalyses the reaction GTP + H2O = GDP + phosphate + H(+). In terms of biological role, GTP hydrolase that promotes the GTP-dependent binding of aminoacyl-tRNA to the A-site of ribosomes during protein biosynthesis. The chain is Elongation factor Tu from Alkalilimnicola ehrlichii (strain ATCC BAA-1101 / DSM 17681 / MLHE-1).